Here is a 302-residue protein sequence, read N- to C-terminus: Ornithine carbamoyltransferase (302 aa).

Carbamoyl phosphate-binding positions include 47–50, glutamine 74, arginine 98, and 125–128; these read STRT and HPCQ. L-ornithine is bound by residues asparagine 156, aspartate 220, and 224–225; that span reads SM. Residues 260–261 and arginine 288 contribute to the carbamoyl phosphate site; that span reads CL.

Belongs to the aspartate/ornithine carbamoyltransferase superfamily. OTCase family.

The protein resides in the cytoplasm. The catalysed reaction is carbamoyl phosphate + L-ornithine = L-citrulline + phosphate + H(+). Its pathway is amino-acid biosynthesis; L-arginine biosynthesis; L-arginine from L-ornithine and carbamoyl phosphate: step 1/3. In terms of biological role, reversibly catalyzes the transfer of the carbamoyl group from carbamoyl phosphate (CP) to the N(epsilon) atom of ornithine (ORN) to produce L-citrulline. The sequence is that of Ornithine carbamoyltransferase from Methanosphaera stadtmanae (strain ATCC 43021 / DSM 3091 / JCM 11832 / MCB-3).